The following is a 443-amino-acid chain: Methyl-coenzyme M reductase II subunit beta (443 aa).

Residue Tyr-367 participates in coenzyme M binding. Residue Gly-369 coordinates coenzyme B.

Belongs to the methyl-coenzyme M reductase beta subunit family. MCR is a hexamer of two alpha, two beta, and two gamma chains, forming a dimer of heterotrimers. Coenzyme F430 serves as cofactor.

It carries out the reaction coenzyme B + methyl-coenzyme M = methane + coenzyme M-coenzyme B heterodisulfide. The protein operates within one-carbon metabolism; methyl-coenzyme M reduction; methane from methyl-coenzyme M: step 1/1. In terms of biological role, component of the methyl-coenzyme M reductase (MCR) I that catalyzes the reductive cleavage of methyl-coenzyme M (CoM-S-CH3 or 2-(methylthio)ethanesulfonate) using coenzyme B (CoB or 7-mercaptoheptanoylthreonine phosphate) as reductant which results in the production of methane and the mixed heterodisulfide of CoB and CoM (CoM-S-S-CoB). This is the final step in methanogenesis. This chain is Methyl-coenzyme M reductase II subunit beta (mrtB), found in Methanothermus fervidus (strain ATCC 43054 / DSM 2088 / JCM 10308 / V24 S).